The chain runs to 360 residues: GDSL esterase/lipase At2g31550 (360 aa).

A signal peptide spans 1-27 (MSTSKAITLTLFITTTLLASCDAAANA). An N-linked (GlcNAc...) asparagine glycan is attached at N26. Catalysis depends on S42, which acts as the Nucleophile. N-linked (GlcNAc...) asparagine glycans are attached at residues N104 and N326. Catalysis depends on residues D334 and H337.

Belongs to the 'GDSL' lipolytic enzyme family.

The protein resides in the secreted. The sequence is that of GDSL esterase/lipase At2g31550 from Arabidopsis thaliana (Mouse-ear cress).